The primary structure comprises 427 residues: Serine protease HTRA2, mitochondrial (427 aa).

A disordered region spans residues 33 to 57 (HTASSSKGSGGDNSKDQENNGQNKS). A helical transmembrane segment spans residues 67 to 87 (VFQFCVPFSLGALVSAVLIEG). The IAP-binding signature appears at 78-81 (ALVS). Residues 144-307 (SNGSGFVIEQ…IPIDYVKVFL (164 aa)) form a serine protease region. Catalysis depends on charge relay system residues His162, Asp194, and Ser271. A PDZ domain is found at 330–415 (MGITMLTLTP…DLEIVILRGV (86 aa)).

The protein belongs to the peptidase S1C family. As to quaternary structure, interacts with th/DIAP1 (via BIR 2 domain).

The protein localises to the mitochondrion intermembrane space. Its subcellular location is the mitochondrion membrane. The enzyme catalyses Cleavage of non-polar aliphatic amino-acids at the P1 position, with a preference for Val, Ile and Met. At the P2 and P3 positions, Arg is selected most strongly with a secondary preference for other hydrophilic residues.. Functionally, serine protease that shows proteolytic activity against a non-specific substrate beta-casein. Promotes or induces cell death either by direct binding to and inhibition of BIRC proteins (also called inhibitor of apoptosis proteins, IAPs), leading to an increase in caspase activity, or by a BIRC inhibition-independent, caspase-independent and serine protease activity-dependent mechanism. Can antagonize antiapoptotic activity of th/Diap1 by directly inducing the degradation of th/Diap1. The chain is Serine protease HTRA2, mitochondrial from Drosophila persimilis (Fruit fly).